The primary structure comprises 157 residues: Phosphopantetheine adenylyltransferase (157 aa).

S9 serves as a coordination point for substrate. ATP-binding positions include 9–10 and H17; that span reads SF. Residues K41, T73, and R87 each coordinate substrate. Residues 88 to 90, E98, and 122 to 128 contribute to the ATP site; these read GIR and YQDISSS.

This sequence belongs to the bacterial CoaD family. Homohexamer. Mg(2+) serves as cofactor.

Its subcellular location is the cytoplasm. It carries out the reaction (R)-4'-phosphopantetheine + ATP + H(+) = 3'-dephospho-CoA + diphosphate. Its pathway is cofactor biosynthesis; coenzyme A biosynthesis; CoA from (R)-pantothenate: step 4/5. Reversibly transfers an adenylyl group from ATP to 4'-phosphopantetheine, yielding dephospho-CoA (dPCoA) and pyrophosphate. This chain is Phosphopantetheine adenylyltransferase, found in Oenococcus oeni (strain ATCC BAA-331 / PSU-1).